We begin with the raw amino-acid sequence, 128 residues long: Small ribosomal subunit protein uS9 (128 aa).

The segment at 105 to 128 is disordered; the sequence is DPRSVERKKPGQPKARRRFQFSKR. Over residues 114 to 128 the composition is skewed to basic residues; it reads PGQPKARRRFQFSKR.

The protein belongs to the universal ribosomal protein uS9 family.

This Bacteroides thetaiotaomicron (strain ATCC 29148 / DSM 2079 / JCM 5827 / CCUG 10774 / NCTC 10582 / VPI-5482 / E50) protein is Small ribosomal subunit protein uS9.